The primary structure comprises 141 residues: Large ribosomal subunit protein uL16 (141 aa).

The protein belongs to the universal ribosomal protein uL16 family. Part of the 50S ribosomal subunit.

Its function is as follows. Binds 23S rRNA and is also seen to make contacts with the A and possibly P site tRNAs. This chain is Large ribosomal subunit protein uL16, found in Hydrogenobaculum sp. (strain Y04AAS1).